The following is a 206-amino-acid chain: ATP phosphoribosyltransferase (206 aa).

This sequence belongs to the ATP phosphoribosyltransferase family. Short subfamily. In terms of assembly, heteromultimer composed of HisG and HisZ subunits.

It localises to the cytoplasm. The catalysed reaction is 1-(5-phospho-beta-D-ribosyl)-ATP + diphosphate = 5-phospho-alpha-D-ribose 1-diphosphate + ATP. It participates in amino-acid biosynthesis; L-histidine biosynthesis; L-histidine from 5-phospho-alpha-D-ribose 1-diphosphate: step 1/9. Functionally, catalyzes the condensation of ATP and 5-phosphoribose 1-diphosphate to form N'-(5'-phosphoribosyl)-ATP (PR-ATP). Has a crucial role in the pathway because the rate of histidine biosynthesis seems to be controlled primarily by regulation of HisG enzymatic activity. The polypeptide is ATP phosphoribosyltransferase (Brachyspira hyodysenteriae (strain ATCC 49526 / WA1)).